Consider the following 142-residue polypeptide: Large ribosomal subunit protein uL13 (142 aa).

It belongs to the universal ribosomal protein uL13 family. Part of the 50S ribosomal subunit.

In terms of biological role, this protein is one of the early assembly proteins of the 50S ribosomal subunit, although it is not seen to bind rRNA by itself. It is important during the early stages of 50S assembly. The protein is Large ribosomal subunit protein uL13 of Azoarcus sp. (strain BH72).